The chain runs to 364 residues: tRNA 2-selenouridine synthase (364 aa).

The 124-residue stretch at Leu-14–Ile-137 folds into the Rhodanese domain. The active-site S-selanylcysteine intermediate is the Cys-97.

The protein belongs to the SelU family. Monomer.

The catalysed reaction is 5-methylaminomethyl-2-thiouridine(34) in tRNA + selenophosphate + (2E)-geranyl diphosphate + H2O + H(+) = 5-methylaminomethyl-2-selenouridine(34) in tRNA + (2E)-thiogeraniol + phosphate + diphosphate. It carries out the reaction 5-methylaminomethyl-2-thiouridine(34) in tRNA + (2E)-geranyl diphosphate = 5-methylaminomethyl-S-(2E)-geranyl-thiouridine(34) in tRNA + diphosphate. It catalyses the reaction 5-methylaminomethyl-S-(2E)-geranyl-thiouridine(34) in tRNA + selenophosphate + H(+) = 5-methylaminomethyl-2-(Se-phospho)selenouridine(34) in tRNA + (2E)-thiogeraniol. The enzyme catalyses 5-methylaminomethyl-2-(Se-phospho)selenouridine(34) in tRNA + H2O = 5-methylaminomethyl-2-selenouridine(34) in tRNA + phosphate. Its function is as follows. Involved in the post-transcriptional modification of the uridine at the wobble position (U34) of tRNA(Lys), tRNA(Glu) and tRNA(Gln). Catalyzes the conversion of 2-thiouridine (S2U-RNA) to 2-selenouridine (Se2U-RNA). Acts in a two-step process involving geranylation of 2-thiouridine (S2U) to S-geranyl-2-thiouridine (geS2U) and subsequent selenation of the latter derivative to 2-selenouridine (Se2U) in the tRNA chain. The sequence is that of tRNA 2-selenouridine synthase from Shigella boydii serotype 18 (strain CDC 3083-94 / BS512).